The primary structure comprises 161 residues: Peptidyl-prolyl cis-trans isomerase 10 (161 aa).

Residues 1-153 enclose the PPIase cyclophilin-type domain; sequence MSVTLHTTSG…VQQKIQNVTI (153 aa).

This sequence belongs to the cyclophilin-type PPIase family. PPIL3 subfamily.

The enzyme catalyses [protein]-peptidylproline (omega=180) = [protein]-peptidylproline (omega=0). In terms of biological role, PPIases accelerate the folding of proteins. It catalyzes the cis-trans isomerization of proline imidic peptide bonds in oligopeptides. This chain is Peptidyl-prolyl cis-trans isomerase 10 (cyn-10), found in Caenorhabditis elegans.